The sequence spans 196 residues: Inosine triphosphate pyrophosphatase 2 (196 aa).

An ITP-binding site is contributed by 20 to 25; that stretch reads TGNDGK. Glutamate 48 provides a ligand contact to Mg(2+). ITP contacts are provided by residues lysine 61, 77–78, lysine 94, 153–156, lysine 177, and 182–183; these read DT, FGWD, and PR.

It belongs to the HAM1 NTPase family. In terms of assembly, homodimer. Mg(2+) is required as a cofactor. It depends on Mn(2+) as a cofactor.

The protein localises to the cytoplasm. It carries out the reaction ITP + H2O = IMP + diphosphate + H(+). It catalyses the reaction dITP + H2O = dIMP + diphosphate + H(+). The enzyme catalyses XTP + H2O = XMP + diphosphate + H(+). In terms of biological role, pyrophosphatase that hydrolyzes non-canonical purine nucleotides such as inosine triphosphate (ITP), deoxyinosine triphosphate (dITP) or xanthosine 5'-triphosphate (XTP) to their respective monophosphate derivatives. The enzyme does not distinguish between the deoxy- and ribose forms. Probably excludes non-canonical purines from RNA and DNA precursor pools, thus preventing their incorporation into RNA and DNA and avoiding chromosomal lesions. This is Inosine triphosphate pyrophosphatase 2 from Trypanosoma cruzi (strain CL Brener).